We begin with the raw amino-acid sequence, 568 residues long: Zinc finger protein 76 (568 aa).

Lys-24 is covalently cross-linked (Glycyl lysine isopeptide (Lys-Gly) (interchain with G-Cter in SUMO2)). 3 tandem repeats follow at residues 34–45 (IQLEDGTTAYIH), 62–73 (VQLEDGSMAYIH), and 88–99 (VQLEDGSTAYIH). Residues 34–99 (IQLEDGTTAY…LEDGSTAYIH (66 aa)) are 3 X 12 AA approximate repeats. C2H2-type zinc fingers lie at residues 165–189 (FRCG…ERAH), 195–219 (YRCD…VRTH), 225–249 (YKCP…VRTH), 255–279 (FRCP…VRTH), 285–309 (YTCP…VRIH), 315–339 (YVCT…HVVH), and 345–368 (YTCS…RSAH). The segment at 365-401 (RSAHGELEATEESEQALYEQQQLEAASAAEESPSPKP) is disordered. Residues 379–396 (QALYEQQQLEAASAAEES) are compositionally biased toward low complexity.

The protein belongs to the krueppel C2H2-type zinc-finger protein family.

Its subcellular location is the nucleus. In terms of biological role, may be involved in transcriptional regulation. This Rattus norvegicus (Rat) protein is Zinc finger protein 76 (Znf76).